Reading from the N-terminus, the 262-residue chain is Small ribosomal subunit protein eS1 (262 aa).

It belongs to the eukaryotic ribosomal protein eS1 family. As to quaternary structure, component of the small ribosomal subunit. Mature ribosomes consist of a small (40S) and a large (60S) subunit. The 40S subunit contains about 33 different proteins and 1 molecule of RNA (18S). The 60S subunit contains about 49 different proteins and 3 molecules of RNA (25S, 5.8S and 5S).

It is found in the cytoplasm. This Theileria annulata protein is Small ribosomal subunit protein eS1.